We begin with the raw amino-acid sequence, 663 residues long: DNA ligase (663 aa).

Residues 31-35 (DYEYD), 80-81 (SL), and E109 each bind NAD(+). K111 serves as the catalytic N6-AMP-lysine intermediate. 4 residues coordinate NAD(+): R132, E167, K283, and K307. Residues C401, C404, C419, and C424 each contribute to the Zn(2+) site. Positions 586–663 (KIDNRFLGKT…TEEDLKDMIK (78 aa)) constitute a BRCT domain.

Belongs to the NAD-dependent DNA ligase family. LigA subfamily. The cofactor is Mg(2+). Mn(2+) is required as a cofactor.

It carries out the reaction NAD(+) + (deoxyribonucleotide)n-3'-hydroxyl + 5'-phospho-(deoxyribonucleotide)m = (deoxyribonucleotide)n+m + AMP + beta-nicotinamide D-nucleotide.. Functionally, DNA ligase that catalyzes the formation of phosphodiester linkages between 5'-phosphoryl and 3'-hydroxyl groups in double-stranded DNA using NAD as a coenzyme and as the energy source for the reaction. It is essential for DNA replication and repair of damaged DNA. The polypeptide is DNA ligase (Clostridium kluyveri (strain NBRC 12016)).